Reading from the N-terminus, the 763-residue chain is DNA-binding protein SATB1 (763 aa).

Positions 1–15 are enriched in basic and acidic residues; it reads MDHLNEATQGKEHSE. A disordered region spans residues 1 to 54; that stretch reads MDHLNEATQGKEHSEMSNNVSDPKGPPAKIARLEQNGSPLGRGRLGSTGAKMQG. Residues 20-40 carry the Nuclear localization signal motif; sequence VSDPKGPPAKIARLEQNGSPL. Residue Lys-51 forms a Glycyl lysine isopeptide (Lys-Gly) (interchain with G-Cter in SUMO2) linkage. The region spanning 71–172 is the CMP domain; it reads GTMLPVFCVV…VVTLKIQLHS (102 aa). Lys-136 bears the N6-acetyllysine mark. A Protein interaction motif is present at residues 139–143; that stretch reads PVPLS. The region spanning 175–248 is the CUTL domain; it reads KLEDLPPEQW…WYKHFKKTKD (74 aa). Ser-185 is modified (phosphoserine). Residues 224–278 are nuclear matrix targeting sequence (NMTS); that stretch reads YYANVSAAKCQEFGRWYKHFKKTKDMMVEMDSLSELSQQGANHVNFGQQPVPGNT. Positions 266–296 are enriched in polar residues; sequence HVNFGQQPVPGNTAEQPPSPAQLSHGSQPSV. The segment at 266 to 307 is disordered; that stretch reads HVNFGQQPVPGNTAEQPPSPAQLSHGSQPSVRTPLPNLHPGL. 2 DNA-binding regions (CUT) span residues 361–448 and 484–571; these read LEQQ…QDER and NGKP…EQES. DNA-binding positions include Gln-390, 400–410, and Asn-425; that span reads RTQGLLSEILR. The segment covering 591-607 has biased composition (low complexity); it reads QIQQQQQQQQQQQQQQQ. The segment at 591–649 is disordered; the sequence is QIQQQQQQQQQQQQQQQAPPPPQPQQQPQTGPRLPPRQPTVASPAESDEENRQKTRPRT. At Ser-637 the chain carries Phosphoserine. The segment at residues 645-704 is a DNA-binding region (homeobox); the sequence is TRPRTKISVEALGILQSFIQDVGLYPDEEAIQTLSAQLDLPKYTIIKFFQNQRYYLKHHG. Residue Lys-744 forms a Glycyl lysine isopeptide (Lys-Gly) (interchain with G-Cter in SUMO) linkage.

The protein belongs to the CUT homeobox family. As to quaternary structure, interacts with CUX1 (via DNA-binding domains); the interaction inhibits the attachment of both proteins to DNA. Homodimer. Part of the nuclear protein complex gamma-globin promoter and enhancer binding factor (gamma-PE) composed at least of SATB1 and HOXB2. Interaction with CtBP1 when not acetylated stabilizes attachment to DNA and promotes transcription repression. Interacts with PCAF. Interacts with sumoylated PML and HDAC1 via the CMP domain. Interacts also with DYNLT3 and POLR2J2. Binds to EP300. (Microbial infection) Interacts (via the CMP domain) with HIV-1 Tat. Sumoylated. Sumoylation promotes cleavage by caspases. In terms of processing, phosphorylated by PKC. Acetylated by PCAF. Phosphorylated form interacts with HDAC1, but unphosphorylated form interacts with PCAF. DNA binding properties are activated by phosphorylation and inactivated by acetylation. In opposition, gene expression is down-regulated by phosphorylation but up-regulated by acetylation. Post-translationally, cleaved at Asp-254 by caspase-3 and caspase-6 during T-cell apoptosis in thymus and during B-cell stimulation. The cleaved forms cannot dimerize and lose transcription regulation function because of impaired DNA and chromatin association. Expressed predominantly in thymus.

It is found in the nucleus matrix. It localises to the nucleus. Its subcellular location is the PML body. Its function is as follows. Crucial silencing factor contributing to the initiation of X inactivation mediated by Xist RNA that occurs during embryogenesis and in lymphoma. Binds to DNA at special AT-rich sequences, the consensus SATB1-binding sequence (CSBS), at nuclear matrix- or scaffold-associated regions. Thought to recognize the sugar-phosphate structure of double-stranded DNA. Transcriptional repressor controlling nuclear and viral gene expression in a phosphorylated and acetylated status-dependent manner, by binding to matrix attachment regions (MARs) of DNA and inducing a local chromatin-loop remodeling. Acts as a docking site for several chromatin remodeling enzymes (e.g. PML at the MHC-I locus) and also by recruiting corepressors (HDACs) or coactivators (HATs) directly to promoters and enhancers. Modulates genes that are essential in the maturation of the immune T-cell CD8SP from thymocytes. Required for the switching of fetal globin species, and beta- and gamma-globin genes regulation during erythroid differentiation. Plays a role in chromatin organization and nuclear architecture during apoptosis. Interacts with the unique region (UR) of cytomegalovirus (CMV). Alu-like motifs and SATB1-binding sites provide a unique chromatin context which seems preferentially targeted by the HIV-1 integration machinery. Moreover, HIV-1 Tat may overcome SATB1-mediated repression of IL2 and IL2RA (interleukin) in T-cells by binding to the same domain than HDAC1. Delineates specific epigenetic modifications at target gene loci, directly up-regulating metastasis-associated genes while down-regulating tumor-suppressor genes. Reprograms chromatin organization and the transcription profiles of breast tumors to promote growth and metastasis. Promotes neuronal differentiation of neural stem/progenitor cells in the adult subventricular zone, possibly by positively regulating the expression of NEUROD1. This chain is DNA-binding protein SATB1, found in Homo sapiens (Human).